The following is a 102-amino-acid chain: Small ribosomal subunit protein uS10 (102 aa).

The protein belongs to the universal ribosomal protein uS10 family. In terms of assembly, part of the 30S ribosomal subunit.

Involved in the binding of tRNA to the ribosomes. This Methylocella silvestris (strain DSM 15510 / CIP 108128 / LMG 27833 / NCIMB 13906 / BL2) protein is Small ribosomal subunit protein uS10.